Reading from the N-terminus, the 220-residue chain is Translation initiation factor 6 (220 aa).

The protein belongs to the eIF-6 family.

Functionally, binds to the 50S ribosomal subunit and prevents its association with the 30S ribosomal subunit to form the 70S initiation complex. This is Translation initiation factor 6 from Pyrobaculum arsenaticum (strain DSM 13514 / JCM 11321 / PZ6).